Consider the following 133-residue polypeptide: Peptide methionine sulfoxide reductase MsrB (133 aa).

The 123-residue stretch at 8 to 130 (LDVWRELLSD…NSASLRLKPR (123 aa)) folds into the MsrB domain. Cys-47, Cys-50, Cys-96, and Cys-99 together coordinate Zn(2+). Catalysis depends on Cys-119, which acts as the Nucleophile.

The protein belongs to the MsrB Met sulfoxide reductase family. Zn(2+) is required as a cofactor.

The catalysed reaction is L-methionyl-[protein] + [thioredoxin]-disulfide + H2O = L-methionyl-(R)-S-oxide-[protein] + [thioredoxin]-dithiol. This is Peptide methionine sulfoxide reductase MsrB from Azotobacter vinelandii (strain DJ / ATCC BAA-1303).